The sequence spans 3088 residues: Protein prune homolog 2 (3088 aa).

Residue Met-1 is modified to N-acetylmethionine. Residues 109-111 (GSS) carry the DHH motif motif. 22 disordered regions span residues 433-468 (IRSSRSSKESSVFLSDDSPVGEGAGPHHTLLPGLDS), 490-628 (HFDL…EPAS), 673-759 (SSEQ…QGTN), 771-795 (SGRSPTAMPEPWGNPTDDGEPAAVA), 846-909 (SELL…PKTR), 952-1080 (SNLG…SSYD), 1192-1211 (SDEHTKDSAPSEHHTLNEKS), 1231-1371 (SFML…LVAS), 1413-1452 (RDVQTGMSADNLQPKDTHEKHLMSQRNSGETTETSDGMNF), 1472-1491 (LEPENVGGGPPHRVPRSLDF), 1515-1585 (VKGS…QESE), 1632-1698 (DSFS…EESI), 1741-1768 (LDSSEPAENENKSNPFCDNQQSSPDPWT), 1782-1813 (VEKEKRSSPETGTTGDVAWQISPKASFPKNED), 2089-2114 (ILTHCEHDSNSQASDSPDICHDSEAK), 2173-2215 (YQAD…PDMA), 2240-2260 (QEPTPEGDGSWISDSFSPESQ), 2492-2542 (SDLP…KNED), 2589-2667 (TQLA…SELG), 2687-2710 (ALEEASGPVSQSQKSKSRGRAGPD), 2814-2833 (QSEGSILSDDNLDSPDEIDI), and 2841-2875 (PDEADSFEYTGHDPTANKDSGQESESIPEYTAEEE). Residues 503–512 (SGQSQQSSHS) show a composition bias toward low complexity. A compositionally biased stretch (basic and acidic residues) spans 562–582 (SLVEHDEEFVQRQDSPRDNSE). 2 stretches are compositionally biased toward polar residues: residues 613–625 (MNSLVESSPSTEE) and 673–684 (SSEQESVFQSPE). Residues 685–699 (SWKEHKPSSIDRRAS) are compositionally biased toward basic and acidic residues. Positions 750–759 (LPNTSPQGTN) are enriched in polar residues. Residues 846 to 857 (SELLDNSPSEIN) are compositionally biased toward polar residues. The span at 865 to 876 (WGKKNNDSRDHI) shows a compositional bias: basic and acidic residues. The segment covering 881-894 (NPSSDLDHTWTNSK) has biased composition (polar residues). Over residues 895-909 (PPKEDQNGLVDPKTR) the composition is skewed to basic and acidic residues. Residues 964 to 977 (DTNYSTSDSYTSPT) are compositionally biased toward low complexity. Residues 980–1000 (GDEKETEHKPFAKEEGFESKD) show a composition bias toward basic and acidic residues. 2 stretches are compositionally biased toward polar residues: residues 1001-1027 (GNSTAEETDIPPQSLQQSSRNRISSGP) and 1037-1048 (HTDNSSEINTTH). Basic and acidic residues-rich tracts occupy residues 1049–1062 (NLDENELKTEHTDG), 1192–1208 (SDEHTKDSAPSEHHTLN), 1282–1293 (HLDKQDTERETL), 1314–1339 (DPWKGHGDGQSESEKEAQGATDRGHL), and 1425–1434 (QPKDTHEKHL). Residues 1436–1450 (SQRNSGETTETSDGM) show a composition bias toward polar residues. A compositionally biased stretch (polar residues) spans 1537-1585 (SSEYTHSSASSPELNDSSVALSSWGQQPSSGYQEENQGNWSEQNHQESE). Residues 1687–1698 (SDDDSVGGEESI) are compositionally biased toward acidic residues. A compositionally biased stretch (polar residues) spans 1752-1768 (KSNPFCDNQQSSPDPWT). Composition is skewed to basic and acidic residues over residues 2516–2542 (EKTIPTKEPEQIKSEYKEERCTEKNED) and 2604–2622 (NERKGLSAEKMSSKSDTRS). Positions 2623–2632 (SFESPAQDQS) are enriched in polar residues. The span at 2823–2833 (DNLDSPDEIDI) shows a compositional bias: acidic residues. Residues 2895–3056 (DMKVIEPYRR…SIIKLDEELR (162 aa)) form the CRAL-TRIO domain.

It belongs to the PPase class C family. Prune subfamily. A high level of expression seen in the nervous system (brain, cerebellum and spinal cord) as well as adrenal gland. Expressed at high levels in noneuroblastoma, rhabdomyosarcoma, melanoma and some osteosarcoma cell lines, whereas at only low levels in cancer cell lines of liver, breast, thyroid and colon. Expression is significantly higher in favorable tumors than aggressive ones.

It localises to the cytoplasm. May play an important role in regulating differentiation, survival and aggressiveness of the tumor cells. In Homo sapiens (Human), this protein is Protein prune homolog 2 (PRUNE2).